A 58-amino-acid chain; its full sequence is uncharacterized protein (58 aa).

Residues 3–52 (KVILEHLQRIEKQLEILNSKIENFLGFEELSEEELKELDEIEAKMEKGEK) are a coiled coil.

This is an uncharacterized protein from Archaeoglobus fulgidus (strain ATCC 49558 / DSM 4304 / JCM 9628 / NBRC 100126 / VC-16).